An 821-amino-acid polypeptide reads, in one-letter code: Lysosomal beta glucosidase (821 aa).

Positions 1–24 are cleaved as a signal peptide; it reads MKTIKSLFLLSLLIVNLLISSTYG. The propeptide occupies 25 to 69; it reads SSIRVSIVGGEEAEVIEKPRTFGNKRELKLEYSQIYPKKQLNQEN. Residues Asn113, Asn146, and Asn266 are each glycosylated (N-linked (GlcNAc...) asparagine). Asp363 is a catalytic residue. 4 N-linked (GlcNAc...) asparagine glycosylation sites follow: Asn535, Asn555, Asn703, and Asn721.

Belongs to the glycosyl hydrolase 3 family. In terms of processing, glycosylated. The polyoligosaccharides are of the high-mannose type and are highly substituted with both phosphate and sulfate moieties.

The protein localises to the lysosome. The catalysed reaction is Hydrolysis of terminal, non-reducing beta-D-glucosyl residues with release of beta-D-glucose.. This is Lysosomal beta glucosidase (gluA) from Dictyostelium discoideum (Social amoeba).